The primary structure comprises 289 residues: Energy-coupling factor transporter ATP-binding protein EcfA2 (289 aa).

The ABC transporter domain occupies 3–246 (IRFKQVDFTY…TQWLKEKQLG (244 aa)). 40–47 (GHTGSGKS) contacts ATP.

It belongs to the ABC transporter superfamily. Energy-coupling factor EcfA family. Forms a stable energy-coupling factor (ECF) transporter complex composed of 2 membrane-embedded substrate-binding proteins (S component), 2 ATP-binding proteins (A component) and 2 transmembrane proteins (T component).

Its subcellular location is the cell membrane. In terms of biological role, ATP-binding (A) component of a common energy-coupling factor (ECF) ABC-transporter complex. Unlike classic ABC transporters this ECF transporter provides the energy necessary to transport a number of different substrates. The chain is Energy-coupling factor transporter ATP-binding protein EcfA2 from Enterococcus faecalis (strain ATCC 700802 / V583).